Consider the following 644-residue polypeptide: Exoribonuclease 2 (644 aa).

The RNB domain occupies 189–516; sequence REDLTALDFV…NHRLLKAVIK (328 aa). An S1 motif domain is found at 561-643; the sequence is DTRFAAEIVD…ETRSIIARPV (83 aa).

This sequence belongs to the RNR ribonuclease family. RNase II subfamily.

The protein resides in the cytoplasm. The enzyme catalyses Exonucleolytic cleavage in the 3'- to 5'-direction to yield nucleoside 5'-phosphates.. In terms of biological role, involved in mRNA degradation. Hydrolyzes single-stranded polyribonucleotides processively in the 3' to 5' direction. The sequence is that of Exoribonuclease 2 from Escherichia coli O8 (strain IAI1).